A 103-amino-acid polypeptide reads, in one-letter code: NADH-quinone oxidoreductase subunit K (103 aa).

Transmembrane regions (helical) follow at residues 4–24 (LTSYAFVSMMLFSIGAIGVIA), 28–48 (IFVIYMSIEMMLNGINLFLIT), and 64–84 (MVISIAAAEAAIFLSVIILLF).

It belongs to the complex I subunit 4L family. In terms of assembly, NDH-1 is composed of 14 different subunits. Subunits NuoA, H, J, K, L, M, N constitute the membrane sector of the complex.

The protein resides in the cell inner membrane. It catalyses the reaction a quinone + NADH + 5 H(+)(in) = a quinol + NAD(+) + 4 H(+)(out). In terms of biological role, NDH-1 shuttles electrons from NADH, via FMN and iron-sulfur (Fe-S) centers, to quinones in the respiratory chain. The immediate electron acceptor for the enzyme in this species is believed to be ubiquinone. Couples the redox reaction to proton translocation (for every two electrons transferred, four hydrogen ions are translocated across the cytoplasmic membrane), and thus conserves the redox energy in a proton gradient. This is NADH-quinone oxidoreductase subunit K from Aliarcobacter butzleri (strain RM4018) (Arcobacter butzleri).